The chain runs to 273 residues: Light-independent protochlorophyllide reductase iron-sulfur ATP-binding protein (273 aa).

ATP contacts are provided by residues 12–17 (GIGKST) and Lys41. Ser16 is a binding site for Mg(2+). 2 residues coordinate [4Fe-4S] cluster: Cys97 and Cys131. 182–183 (NR) is a binding site for ATP.

The protein belongs to the NifH/BchL/ChlL family. In terms of assembly, homodimer. Protochlorophyllide reductase is composed of three subunits; BchL, BchN and BchB. It depends on [4Fe-4S] cluster as a cofactor.

It carries out the reaction chlorophyllide a + oxidized 2[4Fe-4S]-[ferredoxin] + 2 ADP + 2 phosphate = protochlorophyllide a + reduced 2[4Fe-4S]-[ferredoxin] + 2 ATP + 2 H2O. The protein operates within porphyrin-containing compound metabolism; bacteriochlorophyll biosynthesis (light-independent). Its function is as follows. Component of the dark-operative protochlorophyllide reductase (DPOR) that uses Mg-ATP and reduced ferredoxin to reduce ring D of protochlorophyllide (Pchlide) to form chlorophyllide a (Chlide). This reaction is light-independent. The L component serves as a unique electron donor to the NB-component of the complex, and binds Mg-ATP. The polypeptide is Light-independent protochlorophyllide reductase iron-sulfur ATP-binding protein (Chloroflexus aurantiacus (strain ATCC 29364 / DSM 637 / Y-400-fl)).